A 218-amino-acid chain; its full sequence is Cytochrome b6 (218 aa).

A helical transmembrane segment spans residues 35 to 55; it reads IFYCLGGITLVCFLIQFATGF. Heme c is bound at residue C38. Heme b-binding residues include H89 and H103. 3 helical membrane passes run 93-113, 119-139, and 189-209; these read ASMM…TGGF, LTWV…VTGY, and LHTF…FLMI. Heme b is bound by residues H190 and H205.

This sequence belongs to the cytochrome b family. PetB subfamily. In terms of assembly, the 4 large subunits of the cytochrome b6-f complex are cytochrome b6, subunit IV (17 kDa polypeptide, PetD), cytochrome f and the Rieske protein, while the 4 small subunits are PetG, PetL, PetM and PetN. The complex functions as a dimer. Heme b serves as cofactor. It depends on heme c as a cofactor.

The protein resides in the cellular thylakoid membrane. In terms of biological role, component of the cytochrome b6-f complex, which mediates electron transfer between photosystem II (PSII) and photosystem I (PSI), cyclic electron flow around PSI, and state transitions. The sequence is that of Cytochrome b6 from Synechococcus sp. (strain CC9605).